The primary structure comprises 720 residues: Aminopeptidase RNPEPL1 (720 aa).

Residue Val321–Asn325 participates in substrate binding. Residue His348 coordinates Zn(2+). Glu349 (proton acceptor) is an active-site residue. Zn(2+)-binding residues include His352 and Glu371. The interval Gly671–Ser708 is disordered.

The protein belongs to the peptidase M1 family. The cofactor is Zn(2+).

The enzyme catalyses Release of N-terminal amino acids, preferentially methionine, from peptides and arylamides.. Broad specificity aminopeptidase which preferentially hydrolyzes an N-terminal methionine, citrulline or glutamine. In Mus musculus (Mouse), this protein is Aminopeptidase RNPEPL1.